A 509-amino-acid polypeptide reads, in one-letter code: Maturase K (509 aa).

The protein belongs to the intron maturase 2 family. MatK subfamily.

It is found in the plastid. Its subcellular location is the chloroplast. Its function is as follows. Usually encoded in the trnK tRNA gene intron. Probably assists in splicing its own and other chloroplast group II introns. This is Maturase K from Solanum lycopersicum (Tomato).